We begin with the raw amino-acid sequence, 359 residues long: Insulin gene enhancer protein ISL-2 (359 aa).

LIM zinc-binding domains are found at residues 25–86 and 87–149; these read AMCV…RLFG and IKCA…LLER. Residues 151 to 191 are disordered; it reads AAGSPRSPGPLPGARGLHLPDAGSGRQPALRPHVHKQTEKT. 2 positions are modified to phosphoserine: serine 154 and serine 157. The segment at residues 191-250 is a DNA-binding region (homeobox); sequence TTRVRTVLNEKQLHTLRTCYAANPRPDALMKEQLVEMTGLSPRVIRVWFQNKRCKDKKKS. Residues 272 to 301 are LIM-binding domain (LID); the sequence is GTPLVAGSPIRHENAVQGSAVEVQTYQPPW. Position 279 is a phosphoserine (serine 279). Over residues 326-336 the composition is skewed to low complexity; sequence ESGSLGNSSGS. The interval 326–359 is disordered; it reads ESGSLGNSSGSDVTSLSSQLPDTPNSMVPSPVET. Over residues 337–359 the composition is skewed to polar residues; it reads DVTSLSSQLPDTPNSMVPSPVET.

Interacts with LHX4.

The protein resides in the nucleus. Its function is as follows. Transcriptional factor that defines subclasses of motoneurons that segregate into columns in the spinal cord and select distinct axon pathways. This is Insulin gene enhancer protein ISL-2 (ISL2) from Homo sapiens (Human).